The chain runs to 157 residues: SsrA-binding protein (157 aa).

Belongs to the SmpB family.

Its subcellular location is the cytoplasm. In terms of biological role, required for rescue of stalled ribosomes mediated by trans-translation. Binds to transfer-messenger RNA (tmRNA), required for stable association of tmRNA with ribosomes. tmRNA and SmpB together mimic tRNA shape, replacing the anticodon stem-loop with SmpB. tmRNA is encoded by the ssrA gene; the 2 termini fold to resemble tRNA(Ala) and it encodes a 'tag peptide', a short internal open reading frame. During trans-translation Ala-aminoacylated tmRNA acts like a tRNA, entering the A-site of stalled ribosomes, displacing the stalled mRNA. The ribosome then switches to translate the ORF on the tmRNA; the nascent peptide is terminated with the 'tag peptide' encoded by the tmRNA and targeted for degradation. The ribosome is freed to recommence translation, which seems to be the essential function of trans-translation. The sequence is that of SsrA-binding protein from Chlorobium luteolum (strain DSM 273 / BCRC 81028 / 2530) (Pelodictyon luteolum).